Here is a 34-residue protein sequence, read N- to C-terminus: Photosystem II reaction center protein M (34 aa).

A helical membrane pass occupies residues 5–25 (ILALIAVALFISIPTAFLVII).

This sequence belongs to the PsbM family. As to quaternary structure, PSII is composed of 1 copy each of membrane proteins PsbA, PsbB, PsbC, PsbD, PsbE, PsbF, PsbH, PsbI, PsbJ, PsbK, PsbL, PsbM, PsbT, PsbX, PsbY, PsbZ, Psb30/Ycf12, at least 3 peripheral proteins of the oxygen-evolving complex and a large number of cofactors. It forms dimeric complexes.

The protein localises to the plastid. Its subcellular location is the chloroplast thylakoid membrane. Functionally, one of the components of the core complex of photosystem II (PSII). PSII is a light-driven water:plastoquinone oxidoreductase that uses light energy to abstract electrons from H(2)O, generating O(2) and a proton gradient subsequently used for ATP formation. It consists of a core antenna complex that captures photons, and an electron transfer chain that converts photonic excitation into a charge separation. This subunit is found at the monomer-monomer interface. The protein is Photosystem II reaction center protein M of Welwitschia mirabilis (Tree tumbo).